The primary structure comprises 157 residues: uncharacterized protein (157 aa).

An N-terminal signal peptide occupies residues 1-30; it reads MLPEQGPQPSTMPLWCLLAACTSLPRQAAT.

It is found in the secreted. This is an uncharacterized protein from Homo sapiens (Human).